The primary structure comprises 172 residues: Exocyst complex component 1-like (172 aa).

This Mus musculus (Mouse) protein is Exocyst complex component 1-like.